The sequence spans 291 residues: Neugrin (291 aa).

Residues 1 to 15 form the signal peptide; that stretch reads MAVTLSLLLSGRVCA. The disordered stretch occupies residues 27–49; the sequence is VADPGPIGREPDPDSDWEPEERE. A compositionally biased stretch (acidic residues) spans 39 to 49; sequence PDSDWEPEERE. A Phosphoserine modification is found at Ser41. Residue Asn158 is glycosylated (N-linked (GlcNAc...) asparagine). The disordered stretch occupies residues 224-270; that stretch reads VAAPLGHPRELQKYSSDSESPRRTGNGALPSDQKLEELKAEEPGNFS. Basic and acidic residues predominate over residues 256-265; the sequence is QKLEELKAEE.

Belongs to the neugrin family. As to quaternary structure, forms a regulatory protein-RNA complex, consisting of RCC1L, NGRN, RPUSD3, RPUSD4, TRUB2, FASTKD2 and 16S mt-rRNA. Interacts with 16S mt-rRNA; this interaction is direct.

Its subcellular location is the nucleus. The protein localises to the secreted. It is found in the mitochondrion membrane. Its function is as follows. Plays an essential role in mitochondrial ribosome biogenesis. As a component of a functional protein-RNA module, consisting of RCC1L, NGRN, RPUSD3, RPUSD4, TRUB2, FASTKD2 and 16S mitochondrial ribosomal RNA (16S mt-rRNA), controls 16S mt-rRNA abundance and is required for intra-mitochondrial translation of core subunits of the oxidative phosphorylation system. The protein is Neugrin (NGRN) of Pongo abelii (Sumatran orangutan).